The following is a 336-amino-acid chain: Large ribosomal subunit protein uL10 (336 aa).

Positions 292–336 (LKEKLSSRAAAPAPEEKEEEVEEEAEEEEEEEEEDAAAGLGALFG) are disordered. A compositionally biased stretch (acidic residues) spans 307–327 (EKEEEVEEEAEEEEEEEEEDA).

It belongs to the universal ribosomal protein uL10 family. As to quaternary structure, part of the 50S ribosomal subunit. Forms part of the ribosomal stalk which helps the ribosome interact with GTP-bound translation factors. Forms a heptameric L10(L12)2(L12)2(L12)2 complex, where L10 forms an elongated spine to which the L12 dimers bind in a sequential fashion.

Its function is as follows. Forms part of the ribosomal stalk, playing a central role in the interaction of the ribosome with GTP-bound translation factors. In Methanothermobacter thermautotrophicus (strain ATCC 29096 / DSM 1053 / JCM 10044 / NBRC 100330 / Delta H) (Methanobacterium thermoautotrophicum), this protein is Large ribosomal subunit protein uL10.